A 424-amino-acid chain; its full sequence is COUP transcription factor 1 (424 aa).

The tract at residues 1-82 (MAMVVSSWRD…QGPPGSGQSQ (82 aa)) is disordered. Residues 39 to 68 (EQQQQQAGSGAPHTPQTPGQPGAPATPGTA) are compositionally biased toward low complexity. The nuclear receptor DNA-binding region spans 84–159 (HIECVVCGDK…VGMRREAVQR (76 aa)). 2 NR C4-type zinc fingers span residues 87 to 107 (CVVCGDKSSGKHYGQFTCEGC) and 123 to 147 (CRANRNCPIDQHHRNQCQYCRLKKC). Positions 185 to 411 (YLSGYISLLL…TLIRDMLLSG (227 aa)) constitute an NR LBD domain.

The protein belongs to the nuclear hormone receptor family. NR2 subfamily. In terms of assembly, binds DNA as dimer; homodimer and probable heterodimer with NR2F6. Interacts with GTF2B; this interaction is direct. Interacts with COPS2.

It localises to the nucleus. In terms of biological role, coup (chicken ovalbumin upstream promoter) transcription factor binds to the ovalbumin promoter and, in conjunction with another protein (S300-II) stimulates initiation of transcription. Binds to both direct repeats and palindromes of the 5'-AGGTCA-3' motif. Represses transcriptional activity of LHCG. This is COUP transcription factor 1 (NR2F1) from Bos taurus (Bovine).